Here is a 232-residue protein sequence, read N- to C-terminus: Sugar fermentation stimulation protein homolog (232 aa).

It belongs to the SfsA family.

This Ruegeria sp. (strain TM1040) (Silicibacter sp.) protein is Sugar fermentation stimulation protein homolog.